The following is a 64-amino-acid chain: Tracheal antimicrobial peptide (64 aa).

The signal sequence occupies residues 1-26 (MRLHHLLLALLFLVLSAWSGFTQGVG). 3 disulfide bridges follow: Cys31/Cys60, Cys38/Cys53, and Cys43/Cys61.

This sequence belongs to the beta-defensin family. LAP/TAP subfamily. Tracheal epithelium.

Its subcellular location is the secreted. Its function is as follows. Has antibacterial activity in vitro against Escherichia coli, Staphylococcus aureus, Klebsiella pneumonia, and Pseudomonas aeruginosa. In addition, the peptide is active against Candida albicans, indicating a broad spectrum of activity. The polypeptide is Tracheal antimicrobial peptide (Bos taurus (Bovine)).